We begin with the raw amino-acid sequence, 419 residues long: MASGKIAAFRDFSAAAMPNVLRLTDLISEGKLAGKRVFIRADLNVPQDDAGNITEDTRIRASVPAIRAALDAGAAVMVTSHLGRPTEGEFKPEDSLAPVAVRLSELLGCEVKLVQNWVDGVDVAPGQVVLLENCRVNKGEKKNSDELAQKMAKLCDVYVNDAFGTAHRAEATTHGIAKFAPIACAGPLLGAELDALGKALGQPARPLVAIVAGSKVSTKLTILKSLADKVDNLIVGGGIANTFMLAAGLKIGKSLAEADLVGDAKAIIDLMAARGASVPIPVDVVCAKEFSATAAATVKDVKDVADDDMILDIGPKTAAQLADQLKASGTIVWNGPVGVFEFDQFGNGTKVLAEAIAASSGFSIAGGGDTLAAIAKYGIADRVGYISTGGGAFLEFLEGKTLPAVEILEQRAQRQEALA.

Residues 42-44, Arg58, 81-84, Arg135, and Arg168 contribute to the substrate site; these read DLN and HLGR. ATP contacts are provided by residues Lys219, Glu341, and 367-370; that span reads GGDT.

Belongs to the phosphoglycerate kinase family. In terms of assembly, monomer.

It localises to the cytoplasm. It carries out the reaction (2R)-3-phosphoglycerate + ATP = (2R)-3-phospho-glyceroyl phosphate + ADP. It participates in carbohydrate degradation; glycolysis; pyruvate from D-glyceraldehyde 3-phosphate: step 2/5. This is Phosphoglycerate kinase from Ralstonia nicotianae (strain ATCC BAA-1114 / GMI1000) (Ralstonia solanacearum).